The sequence spans 77 residues: MKLTCALIITVLFLSITADDSRGKQGYRALKSIAGMLNSKTVRECREQSQGCTNTSPPCCSGLRCSGQSQGGVCISN.

The signal sequence occupies residues 1–19; sequence MKLTCALIITVLFLSITAD. Residues 20–43 constitute a propeptide that is removed on maturation; that stretch reads DSRGKQGYRALKSIAGMLNSKTVR. 3 disulfides stabilise this stretch: cysteine 45/cysteine 60, cysteine 52/cysteine 65, and cysteine 59/cysteine 74.

This sequence belongs to the conotoxin O1 superfamily. Expressed by the venom duct.

It is found in the secreted. This Conus capitaneus (Captain cone) protein is Conotoxin CaHr91.